The chain runs to 132 residues: MKAIGSKPVRALPVGARCICADNTGAKEVEIIAVRNYKGVARRLPTARVGDMVIVTVKKGTPEMRKQVLPAVVIRQRKEIRRPDGTRVKFADNAVVIVTPDGNPKGSDIKGPVAKEAAERWPGIARIAKIII.

This sequence belongs to the universal ribosomal protein uL14 family. As to quaternary structure, part of the 50S ribosomal subunit. Forms a cluster with proteins L3 and L24e, part of which may contact the 16S rRNA in 2 intersubunit bridges.

In terms of biological role, binds to 23S rRNA. Forms part of two intersubunit bridges in the 70S ribosome. The chain is Large ribosomal subunit protein uL14 from Methanocaldococcus jannaschii (strain ATCC 43067 / DSM 2661 / JAL-1 / JCM 10045 / NBRC 100440) (Methanococcus jannaschii).